Consider the following 401-residue polypeptide: Probable aspartate/prephenate aminotransferase (401 aa).

L-aspartate-binding residues include G39, W125, and N175. At K239 the chain carries N6-(pyridoxal phosphate)lysine. R375 is an L-aspartate binding site.

Belongs to the class-I pyridoxal-phosphate-dependent aminotransferase family. Homodimer. Pyridoxal 5'-phosphate is required as a cofactor.

It localises to the cytoplasm. The enzyme catalyses L-aspartate + 2-oxoglutarate = oxaloacetate + L-glutamate. The catalysed reaction is L-arogenate + 2-oxoglutarate = prephenate + L-glutamate. Catalyzes the reversible conversion of aspartate and 2-oxoglutarate to glutamate and oxaloacetate. Can also transaminate prephenate in the presence of glutamate. In Rickettsia conorii (strain ATCC VR-613 / Malish 7), this protein is Probable aspartate/prephenate aminotransferase (aatA).